A 429-amino-acid polypeptide reads, in one-letter code: Histidine--tRNA ligase (429 aa).

Belongs to the class-II aminoacyl-tRNA synthetase family. As to quaternary structure, homodimer.

The protein localises to the cytoplasm. The enzyme catalyses tRNA(His) + L-histidine + ATP = L-histidyl-tRNA(His) + AMP + diphosphate + H(+). The polypeptide is Histidine--tRNA ligase (Pelodictyon phaeoclathratiforme (strain DSM 5477 / BU-1)).